The chain runs to 304 residues: Acetyl-coenzyme A carboxylase carboxyl transferase subunit beta (304 aa).

Residues 26-295 (VWTKCTSCEQ…PFVEPELVEN (270 aa)) form the CoA carboxyltransferase N-terminal domain. Zn(2+) contacts are provided by Cys-30, Cys-33, Cys-49, and Cys-52. A C4-type zinc finger spans residues 30–52 (CTSCEQVLYRDELRRHLEVCPKC). Positions 281–304 (SNKPSPFVEPELVENEEQSKSDNE) are disordered.

This sequence belongs to the AccD/PCCB family. In terms of assembly, acetyl-CoA carboxylase is a heterohexamer composed of biotin carboxyl carrier protein (AccB), biotin carboxylase (AccC) and two subunits each of ACCase subunit alpha (AccA) and ACCase subunit beta (AccD). Zn(2+) serves as cofactor.

It is found in the cytoplasm. The enzyme catalyses N(6)-carboxybiotinyl-L-lysyl-[protein] + acetyl-CoA = N(6)-biotinyl-L-lysyl-[protein] + malonyl-CoA. It functions in the pathway lipid metabolism; malonyl-CoA biosynthesis; malonyl-CoA from acetyl-CoA: step 1/1. Component of the acetyl coenzyme A carboxylase (ACC) complex. Biotin carboxylase (BC) catalyzes the carboxylation of biotin on its carrier protein (BCCP) and then the CO(2) group is transferred by the transcarboxylase to acetyl-CoA to form malonyl-CoA. The polypeptide is Acetyl-coenzyme A carboxylase carboxyl transferase subunit beta (Pasteurella multocida (strain Pm70)).